Here is a 513-residue protein sequence, read N- to C-terminus: Histidine ammonia-lyase (513 aa).

Positions A143–G145 form a cross-link, 5-imidazolinone (Ala-Gly). Residue S144 is modified to 2,3-didehydroalanine (Ser).

The protein belongs to the PAL/histidase family. In terms of processing, contains an active site 4-methylidene-imidazol-5-one (MIO), which is formed autocatalytically by cyclization and dehydration of residues Ala-Ser-Gly.

The protein localises to the cytoplasm. It carries out the reaction L-histidine = trans-urocanate + NH4(+). Its pathway is amino-acid degradation; L-histidine degradation into L-glutamate; N-formimidoyl-L-glutamate from L-histidine: step 1/3. The chain is Histidine ammonia-lyase from Xanthomonas axonopodis pv. citri (strain 306).